The chain runs to 547 residues: Methionine--tRNA ligase (547 aa).

A 'HIGH' region motif is present at residues 15-25; sequence PYANGSLHLGH. Zn(2+) is bound by residues C146, C149, C159, and C162. Residues 332-336 carry the 'KMSKS' region motif; sequence KMSKS. An ATP-binding site is contributed by K335.

It belongs to the class-I aminoacyl-tRNA synthetase family. MetG type 1 subfamily. In terms of assembly, monomer. It depends on Zn(2+) as a cofactor.

The protein localises to the cytoplasm. It carries out the reaction tRNA(Met) + L-methionine + ATP = L-methionyl-tRNA(Met) + AMP + diphosphate. In terms of biological role, is required not only for elongation of protein synthesis but also for the initiation of all mRNA translation through initiator tRNA(fMet) aminoacylation. This is Methionine--tRNA ligase from Baumannia cicadellinicola subsp. Homalodisca coagulata.